A 446-amino-acid polypeptide reads, in one-letter code: Citrate/sodium symporter (446 aa).

The next 5 helical transmembrane spans lie at Ile23–Phe43, Ala46–Gly66, Ile79–Phe99, Val110–Leu130, and Ile148–Ile168. Positions 181 and 183 each coordinate Na(+). 2 residues coordinate citrate: Asn186 and Gly187. 5 helical membrane-spanning segments follow: residues Ile213–Ile233, Glu267–Lys287, Ile289–Ala309, Gln335–Ile355, and Val364–Ile384. Met399 and Asn401 together coordinate Na(+). Citrate-binding residues include Arg402, Gly404, Ser405, and Arg428. Residues Ile425 to Met445 traverse the membrane as a helical segment.

It belongs to the 2-hydroxycarboxylate transporter (2-HCT) (TC 2.A.24) family. Homodimer.

It is found in the cell inner membrane. It catalyses the reaction citrate(out) + 2 Na(+)(out) = citrate(in) + 2 Na(+)(in). Secondary active transporter that catalyzes the uptake of citrate across the membrane with the concomitant uptake of sodium. Is specific for citrate. The sequence is that of Citrate/sodium symporter from Salmonella dublin.